The primary structure comprises 356 residues: ATP-dependent 6-phosphofructokinase (356 aa).

ATP-binding positions include Gly15, 78–79, and 115–118; these read KG and GEGT. Position 116 (Glu116) interacts with Mg(2+). Residues 138–140, Arg175, 182–184, Glu235, Arg272, and 278–281 each bind substrate; these read TID, MGR, and HLQR. Asp140 acts as the Proton acceptor in catalysis.

It belongs to the phosphofructokinase type A (PFKA) family. Mixed-substrate PFK group III subfamily. In terms of assembly, homodimer or homotetramer. The cofactor is Mg(2+).

The protein resides in the cytoplasm. The catalysed reaction is beta-D-fructose 6-phosphate + ATP = beta-D-fructose 1,6-bisphosphate + ADP + H(+). It participates in carbohydrate degradation; glycolysis; D-glyceraldehyde 3-phosphate and glycerone phosphate from D-glucose: step 3/4. Its function is as follows. Catalyzes the phosphorylation of D-fructose 6-phosphate to fructose 1,6-bisphosphate by ATP, the first committing step of glycolysis. The protein is ATP-dependent 6-phosphofructokinase of Chloroflexus aggregans (strain MD-66 / DSM 9485).